The primary structure comprises 290 residues: 4-diphosphocytidyl-2-C-methyl-D-erythritol kinase (290 aa).

The active site involves Lys-10. ATP is bound at residue Pro-96 to Ser-106. Asp-138 is a catalytic residue.

The protein belongs to the GHMP kinase family. IspE subfamily.

It catalyses the reaction 4-CDP-2-C-methyl-D-erythritol + ATP = 4-CDP-2-C-methyl-D-erythritol 2-phosphate + ADP + H(+). It functions in the pathway isoprenoid biosynthesis; isopentenyl diphosphate biosynthesis via DXP pathway; isopentenyl diphosphate from 1-deoxy-D-xylulose 5-phosphate: step 3/6. Catalyzes the phosphorylation of the position 2 hydroxy group of 4-diphosphocytidyl-2C-methyl-D-erythritol. This is 4-diphosphocytidyl-2-C-methyl-D-erythritol kinase from Caulobacter vibrioides (strain NA1000 / CB15N) (Caulobacter crescentus).